We begin with the raw amino-acid sequence, 310 residues long: NADP-dependent D-sorbitol-6-phosphate dehydrogenase (310 aa).

Tyr-48 serves as the catalytic Proton donor. His-108 is a substrate binding site. An NADP(+)-binding site is contributed by 210–272 (TPLGGAAANK…SSKIQRLKEN (63 aa)).

This sequence belongs to the aldo/keto reductase family.

It carries out the reaction D-sorbitol 6-phosphate + NADP(+) = aldehydo-D-glucose 6-phosphate + NADPH + H(+). In terms of biological role, synthesizes sorbitol-6-phosphate, a key intermediate in the synthesis of sorbitol which is a major photosynthetic product in many members of the Rosaceae family. The chain is NADP-dependent D-sorbitol-6-phosphate dehydrogenase (S6PDH) from Malus domestica (Apple).